The following is a 175-amino-acid chain: Myosin regulatory light chain 2, atrial isoform (175 aa).

Position 2 is an N-acetylalanine (Ala2). Phosphoserine occurs at positions 22 and 23. EF-hand domains lie at 32–67 (AQIQEFKEAFSCIDQNRDGIICKSDLRETYSQLGKV), 102–137 (DPEEAILSAFRLFDPSGKGVVNKDQFKQLLLTQADK), and 138–173 (FSPAEVEQMFALTPMDLAGNIDYKSLCYIITHGDEK). The Ca(2+) site is built by Asp45, Asn47, Asp49, and Asp56.

In terms of assembly, myosin is a hexamer of 2 heavy chains and 4 light chains.

In Sus scrofa (Pig), this protein is Myosin regulatory light chain 2, atrial isoform (MYL7).